The sequence spans 199 residues: ATP-dependent Clp protease proteolytic subunit (199 aa).

Ser99 (nucleophile) is an active-site residue. Residue His124 is part of the active site.

It belongs to the peptidase S14 family. As to quaternary structure, fourteen ClpP subunits assemble into 2 heptameric rings which stack back to back to give a disk-like structure with a central cavity, resembling the structure of eukaryotic proteasomes.

The protein localises to the cytoplasm. It catalyses the reaction Hydrolysis of proteins to small peptides in the presence of ATP and magnesium. alpha-casein is the usual test substrate. In the absence of ATP, only oligopeptides shorter than five residues are hydrolyzed (such as succinyl-Leu-Tyr-|-NHMec, and Leu-Tyr-Leu-|-Tyr-Trp, in which cleavage of the -Tyr-|-Leu- and -Tyr-|-Trp bonds also occurs).. Functionally, cleaves peptides in various proteins in a process that requires ATP hydrolysis. Has a chymotrypsin-like activity. Plays a major role in the degradation of misfolded proteins. The polypeptide is ATP-dependent Clp protease proteolytic subunit (Lactococcus lactis subsp. lactis (strain IL1403) (Streptococcus lactis)).